We begin with the raw amino-acid sequence, 475 residues long: NADH-ubiquinone oxidoreductase chain 2 (475 aa).

Helical transmembrane passes span 45-65 (LAVL…GIQY), 82-102 (APIV…LTTT), 112-132 (IALL…VNDL), 133-153 (IPLY…TGVY), 162-182 (AAIL…LSSA), 198-220 (TYYS…ALVF), 240-260 (LYIT…FIYL), 262-282 (IHLF…AVAA), 291-311 (IKSI…TAVL), 318-338 (YIYI…ILAI), 365-385 (LCIA…LPGF), 402-422 (LEAL…AYII), and 447-467 (FIIS…PTLL).

The protein belongs to the complex I subunit 2 family.

It is found in the mitochondrion inner membrane. It catalyses the reaction a ubiquinone + NADH + 5 H(+)(in) = a ubiquinol + NAD(+) + 4 H(+)(out). Functionally, core subunit of the mitochondrial membrane respiratory chain NADH dehydrogenase (Complex I) that is believed to belong to the minimal assembly required for catalysis. Complex I functions in the transfer of electrons from NADH to the respiratory chain. The immediate electron acceptor for the enzyme is believed to be ubiquinone. The chain is NADH-ubiquinone oxidoreductase chain 2 (NAD2) from Candida albicans (strain SC5314 / ATCC MYA-2876) (Yeast).